Here is a 508-residue protein sequence, read N- to C-terminus: Ribonuclease Y (508 aa).

A helical transmembrane segment spans residues 2–22; the sequence is IITALIAIAVGFLIGYLARKI. Residues 198 to 261 form the KH domain; sequence TVSVVTLPND…EVARIALEKL (64 aa). One can recognise an HD domain in the interval 324-417; that stretch reads VLKHSIEVAH…VQAADAISAA (94 aa).

It belongs to the RNase Y family.

It is found in the cell membrane. In terms of biological role, endoribonuclease that initiates mRNA decay. This is Ribonuclease Y from Thermoanaerobacter pseudethanolicus (strain ATCC 33223 / 39E) (Clostridium thermohydrosulfuricum).